A 270-amino-acid chain; its full sequence is A-type potassium channel modulatory protein KCNIP2 (270 aa).

The segment covering 1-17 has biased composition (basic and acidic residues); that stretch reads MRGQGRKESLSDSRDLD. Residues 1–33 form a disordered region; the sequence is MRGQGRKESLSDSRDLDGSYDQLTGHPPGPTKK. Serine 9 bears the Phosphoserine mark. Residues cysteine 45 and cysteine 46 are each lipidated (S-palmitoyl cysteine). Residues 81 to 137 enclose the EF-hand 1; degenerate domain; that stretch reads FELSTVCHRPEGLEQLQEQTKFTRKELQVLYRGFKNECPSGIVNEENFKQIYSQFFP. EF-hand domains lie at 140–175, 176–211, and 224–259; these read DSST…ILRG, TIDD…IYDM, and APRE…DENI. Ca(2+) is bound by residues aspartate 153, asparagine 155, aspartate 157, serine 159, aspartate 164, aspartate 189, asparagine 191, aspartate 193, cysteine 195, glutamate 200, aspartate 237, asparagine 239, aspartate 241, and glutamate 248. Positions 257–270 are interaction with KCND2; sequence ENIMRSMQLFDNVI.

Belongs to the recoverin family. Component of heteromultimeric potassium channels. Identified in potassium channel complexes containing KCND1, KCND2, KCND3, KCNIP1, KCNIP2, KCNIP3, KCNIP4, DPP6 and DPP10. The KCND2-KCNIP2 channel complex contains four KCND2 and four KCNIP2 subunits. Interacts with KCND2. Probably part of a complex consisting of KCNIP1, KCNIP2 isoform 3 and KCND2. At least isoform 2 and isoform 3 can self-associate to form homodimers and homotetramers. Isoform 3 interacts with KCNIP1 in a calcium-dependent manner. Interacts with KCND3; each KCNIP2 monomer interacts with two adjacent KCND3 subunits, through both the N-terminal inactivation ball of a KCND3 subunit and a C-terminal helix from the adjacent KCND3 subunit, clamping them together; this interaction modulates the channel gating kinetics. In terms of processing, palmitoylated. Palmitoylation enhances association with the plasma membrane. As to expression, expressed in heart ventricle with isoform 1 as most prominent form.

It is found in the cell membrane. Its function is as follows. Regulatory subunit of Kv4/D (Shal)-type voltage-gated rapidly inactivating A-type potassium channels. Modulates channel density, inactivation kinetics and rate of recovery from inactivation in a calcium-dependent and isoform-specific manner. Involved in KCND2 and KCND3 trafficking to the cell surface. May be required for the expression of I(To) currents in the heart. This Mustela putorius furo (European domestic ferret) protein is A-type potassium channel modulatory protein KCNIP2.